An 844-amino-acid chain; its full sequence is Elongation factor 2 (844 aa).

The tr-type G domain occupies 17–255 (TNVRNMSVIA…LWGDNYFNPK (239 aa)). 26-33 (AHVDHGKS) serves as a coordination point for GTP. A phosphothreonine mark is found at Thr57 and Thr59. GTP contacts are provided by residues 160–163 (NKVD) and 215–217 (SGL). A Diphthamide modification is found at His700.

The protein belongs to the TRAFAC class translation factor GTPase superfamily. Classic translation factor GTPase family. EF-G/EF-2 subfamily.

Its subcellular location is the cytoplasm. The enzyme catalyses GTP + H2O = GDP + phosphate + H(+). Its function is as follows. Catalyzes the GTP-dependent ribosomal translocation step during translation elongation. During this step, the ribosome changes from the pre-translocational (PRE) to the post-translocational (POST) state as the newly formed A-site-bound peptidyl-tRNA and P-site-bound deacylated tRNA move to the P and E sites, respectively. Catalyzes the coordinated movement of the two tRNA molecules, the mRNA and conformational changes in the ribosome. This Neurospora crassa (strain ATCC 24698 / 74-OR23-1A / CBS 708.71 / DSM 1257 / FGSC 987) protein is Elongation factor 2 (cot-3).